A 248-amino-acid chain; its full sequence is tRNA (guanine-N(1)-)-methyltransferase (248 aa).

S-adenosyl-L-methionine contacts are provided by residues Gly-113 and 133–138; that span reads IGDYVL. Positions 227 to 248 are disordered; sequence RPAQTIRAKGESQKTPKNKTDG. The span at 234–248 shows a compositional bias: basic and acidic residues; sequence AKGESQKTPKNKTDG.

It belongs to the RNA methyltransferase TrmD family. Homodimer.

It localises to the cytoplasm. The catalysed reaction is guanosine(37) in tRNA + S-adenosyl-L-methionine = N(1)-methylguanosine(37) in tRNA + S-adenosyl-L-homocysteine + H(+). Specifically methylates guanosine-37 in various tRNAs. This Rhodopseudomonas palustris (strain TIE-1) protein is tRNA (guanine-N(1)-)-methyltransferase.